A 185-amino-acid chain; its full sequence is DNA-directed RNA polymerase 22 kDa subunit (185 aa).

Belongs to the poxviridae DNA-directed RNA polymerase 22 kDa subunit family. As to quaternary structure, the DNA-dependent RNA polymerase used for intermediate and late genes expression consists of eight subunits Rpo30/OPG66, Rpo7/OPG90, Rpo22/OPG103, Rpo147/OPG105, Rpo18/OPG119, Rpo19/OPG131, Rpo132/OPG151 and Rpo35/OPG156. The same holoenzyme, with the addition of the transcription-specificity factor OPG109, is used for early gene expression.

Its subcellular location is the virion. The catalysed reaction is RNA(n) + a ribonucleoside 5'-triphosphate = RNA(n+1) + diphosphate. Its function is as follows. Part of the DNA-dependent RNA polymerase which catalyzes the transcription of viral DNA into RNA using the four ribonucleoside triphosphates as substrates. Responsible for the transcription of early, intermediate and late genes. DNA-dependent RNA polymerase associates with the early transcription factor (ETF), itself composed of OPG118 and OPG133, thereby allowing the early genes transcription. Late transcription, and probably also intermediate transcription, require newly synthesized RNA polymerase. The protein is DNA-directed RNA polymerase 22 kDa subunit (OPG103) of Cynomys gunnisoni (Gunnison's prairie dog).